The primary structure comprises 314 residues: DNA-directed RNA polymerase subunit alpha (314 aa).

The tract at residues 1–228 is alpha N-terminal domain (alpha-NTD); it reads MIEIEKPRIE…EHLNIFVGLT (228 aa). Residues 245-314 form an alpha C-terminal domain (alpha-CTD) region; it reads KEKVLEMSIE…DLGLGLRKED (70 aa).

This sequence belongs to the RNA polymerase alpha chain family. As to quaternary structure, homodimer. The RNAP catalytic core consists of 2 alpha, 1 beta, 1 beta' and 1 omega subunit. When a sigma factor is associated with the core the holoenzyme is formed, which can initiate transcription.

It catalyses the reaction RNA(n) + a ribonucleoside 5'-triphosphate = RNA(n+1) + diphosphate. In terms of biological role, DNA-dependent RNA polymerase catalyzes the transcription of DNA into RNA using the four ribonucleoside triphosphates as substrates. In Staphylococcus aureus (strain bovine RF122 / ET3-1), this protein is DNA-directed RNA polymerase subunit alpha.